The sequence spans 210 residues: Probable septum site-determining protein MinC (210 aa).

It belongs to the MinC family. Interacts with MinD and FtsZ.

In terms of biological role, cell division inhibitor that blocks the formation of polar Z ring septums. Rapidly oscillates between the poles of the cell to destabilize FtsZ filaments that have formed before they mature into polar Z rings. Prevents FtsZ polymerization. This is Probable septum site-determining protein MinC from Thermotoga neapolitana (strain ATCC 49049 / DSM 4359 / NBRC 107923 / NS-E).